We begin with the raw amino-acid sequence, 288 residues long: Undecaprenyl-diphosphatase (288 aa).

A run of 8 helical transmembrane segments spans residues 25–45, 53–73, 93–113, 121–141, 171–191, 196–216, 231–251, and 263–283; these read GITEWLPISSTGHLILVNEFL, FIDMFNIVIQLGAILAVMVIY, WKLWLKVVIACIPSAFFGLLL, LSNFFVVAIMLVVYGIAFIWI, VLSIIPGTSRSGATILGGIIV, SVAADFTFFLGIPTMFGYSGL, GQAAILLVASVTAFLVSLFVI, and FTVFGKYRIVLGIIVLFYGAV.

It belongs to the UppP family.

The protein localises to the cell membrane. The catalysed reaction is di-trans,octa-cis-undecaprenyl diphosphate + H2O = di-trans,octa-cis-undecaprenyl phosphate + phosphate + H(+). Functionally, catalyzes the dephosphorylation of undecaprenyl diphosphate (UPP). Confers resistance to bacitracin. This Streptococcus thermophilus (strain ATCC BAA-250 / LMG 18311) protein is Undecaprenyl-diphosphatase.